We begin with the raw amino-acid sequence, 310 residues long: tRNA dimethylallyltransferase (310 aa).

14–21 (GPTASGKS) serves as a coordination point for ATP. 16–21 (TASGKS) lines the substrate pocket. Interaction with substrate tRNA stretches follow at residues 39-42 (DSMQ) and 163-167 (QRIVR).

Belongs to the IPP transferase family. In terms of assembly, monomer. Requires Mg(2+) as cofactor.

The enzyme catalyses adenosine(37) in tRNA + dimethylallyl diphosphate = N(6)-dimethylallyladenosine(37) in tRNA + diphosphate. Functionally, catalyzes the transfer of a dimethylallyl group onto the adenine at position 37 in tRNAs that read codons beginning with uridine, leading to the formation of N6-(dimethylallyl)adenosine (i(6)A). The chain is tRNA dimethylallyltransferase from Brucella ovis (strain ATCC 25840 / 63/290 / NCTC 10512).